The chain runs to 288 residues: Co-chaperone protein DjlA (288 aa).

Residues 1 to 6 (MNFIGK) are Periplasmic-facing. The chain crosses the membrane as a helical span at residues 7-30 (ILGFIIGYRFGGLFGGIAGLILGH). Over 31 to 288 (IADKKLYELG…DLICKVKGWK (258 aa)) the chain is Cytoplasmic. Residues 222-288 (DAYKVLGVNA…DLICKVKGWK (67 aa)) form the J domain.

In terms of assembly, homodimer.

It localises to the cell inner membrane. Regulatory DnaK co-chaperone. Direct interaction between DnaK and DjlA is needed for the induction of the wcaABCDE operon, involved in the synthesis of a colanic acid polysaccharide capsule, possibly through activation of the RcsB/RcsC phosphotransfer signaling pathway. The colanic acid capsule may help the bacterium survive conditions outside the host. The protein is Co-chaperone protein DjlA of Mannheimia succiniciproducens (strain KCTC 0769BP / MBEL55E).